The primary structure comprises 387 residues: Protein arginine N-methyltransferase 1 (387 aa).

A disordered region spans residues 1–60 (MDQRKGSGSDANGGLAEATASRLRFEDPDEVMEENPAAAAATVGAEEEGGEGGGGEEVIG). The span at 34 to 44 (ENPAAAAATVG) shows a compositional bias: low complexity. The SAM-dependent MTase PRMT-type domain maps to 66 to 387 (ADYYFDSYSH…VSRTQHYKMR (322 aa)). Positions 79, 88, 112, 134, and 163 each coordinate S-adenosyl-L-methionine. Catalysis depends on residues E178 and E187.

This sequence belongs to the class I-like SAM-binding methyltransferase superfamily. Protein arginine N-methyltransferase family.

The protein resides in the nucleus. The enzyme catalyses L-arginyl-[protein] + S-adenosyl-L-methionine = N(omega)-methyl-L-arginyl-[protein] + S-adenosyl-L-homocysteine + H(+). It catalyses the reaction L-arginyl-[protein] + 2 S-adenosyl-L-methionine = N(omega),N(omega)-dimethyl-L-arginyl-[protein] + 2 S-adenosyl-L-homocysteine + 2 H(+). Its function is as follows. Arginine methyltransferase that methylates (mono and asymmetric dimethylation) the guanidino nitrogens of arginyl residues present in target proteins. This Oryza sativa subsp. indica (Rice) protein is Protein arginine N-methyltransferase 1 (PRMT1).